Consider the following 59-residue polypeptide: Small ribosomal subunit protein bS21 (59 aa).

This sequence belongs to the bacterial ribosomal protein bS21 family.

The chain is Small ribosomal subunit protein bS21 from Acholeplasma laidlawii (strain PG-8A).